Consider the following 305-residue polypeptide: Alpha-N-acetylgalactosaminide alpha-2,6-sialyltransferase 3 (305 aa).

At methionine 1–lysine 8 the chain is on the cytoplasmic side. A helical; Signal-anchor for type II membrane protein transmembrane segment spans residues serine 9–valine 28. Over asparagine 29 to serine 305 the chain is Lumenal. A disulfide bridge connects residues cysteine 80 and cysteine 229. Residues asparagine 148, asparagine 239, and asparagine 301 are each glycosylated (N-linked (GlcNAc...) asparagine).

Belongs to the glycosyltransferase 29 family. In terms of tissue distribution, expressed in brain and kidney. Observed in the epithelium of the proximal tubules, marginal expression was also found in the distal tubules and collecting tubules.

Its subcellular location is the golgi apparatus membrane. The catalysed reaction is an alpha-Neu5Ac-(2-&gt;3)-beta-D-Gal-(1-&gt;3)-D-GlcNAc derivative + CMP-N-acetyl-beta-neuraminate = an alpha-Neu5Ac-(2-&gt;3)-beta-D-Gal-(1-&gt;3)-[alpha-Neu5Ac-(2-&gt;6)]-D-GlcNAc derivative + CMP + H(+). It catalyses the reaction a ganglioside GM1b (d18:1(4E)) + CMP-N-acetyl-beta-neuraminate = a ganglioside GD1alpha (d18:1(4E)) + CMP + H(+). The enzyme catalyses a globoside MSGG + CMP-N-acetyl-beta-neuraminate = a globoside DSGG + CMP + H(+). It carries out the reaction 3-O-[alpha-Neu5Ac-(2-&gt;3)-beta-D-Gal-(1-&gt;3)-alpha-D-GalNAc]-L-Ser-[protein] + CMP-N-acetyl-beta-neuraminate = a 3-O-{alpha-Neu5Ac-(2-&gt;3)-beta-D-Gal-(1-&gt;3)-[alpha-Neu5Ac-(2-&gt;6)]-alpha-D-GalNAc}-L-seryl-[protein] + CMP + H(+). The catalysed reaction is 3-O-[alpha-Neu5Ac-(2-&gt;3)-beta-D-Gal-(1-&gt;3)-alpha-D-GalNAc]-L-Thr-[protein] + CMP-N-acetyl-beta-neuraminate = a 3-O-{alpha-Neu5Ac-(2-&gt;3)-beta-D-Gal-(1-&gt;3)-[alpha-Neu5Ac-(2-&gt;6)]-alpha-D-GalNAc}-L-threonyl-[protein] + CMP + H(+). It functions in the pathway protein modification; protein glycosylation. Its pathway is glycolipid biosynthesis. Functionally, transfers the sialyl group (N-acetyl-alpha-neuraminyl or NeuAc) from CMP-NeuAc to the GalNAc residue on the NeuAc-alpha-2,3-Gal-beta-1,3-GalNAc sequence of glycoproteins and glycolipids forming an alpha-2,6-linkage. Produces branched type disialyl structures by transfer of a sialyl group onto a GalNAc residue inside the backbone core chains. ST6GalNAcIII prefers glycolipids to glycoproteins, predominantly catalyzing the biosynthesis of ganglioside GD1alpha from GM1b. GD1alpha is a critical molecule in the communication and interaction between neuronal cells and their supportive cells, particularly in brain tissues, and functions as an adhesion molecule in the process of metastasis. Sialylation of glycoproteins or glycosphingolipids is very important in tumor development, neuronal development, nerve repair, immunological processes and regulation of hormone sensitivity. This Homo sapiens (Human) protein is Alpha-N-acetylgalactosaminide alpha-2,6-sialyltransferase 3 (ST6GALNAC3).